The following is a 1073-amino-acid chain: 3-hydroxy-3-methylglutaryl-coenzyme A reductase 1 (1073 aa).

The next 8 helical transmembrane spans lie at 23–43 (FMVVPALLASIAYLSIIDDYI), 181–201 (FDILLIFVAYLGMWYALIKVF), 211–231 (FWLAFSTLTSSTFAFLLALLV), 298–318 (HLVVIGGLLSCAIYAHHLTGL), 326–346 (SLILSFDLILVYTFFSAILGL), 399–419 (IAYFKVIMSLGFFAFHAFWLG), 459–479 (GTVVTILPTIFFMPSGFMVQL), and 498–518 (IISKFLVFGFALSIVTNVYFL). One can recognise an SSD domain in the interval 182 to 346 (DILLIFVAYL…YTFFSAILGL (165 aa)). The span at 542–565 (SSVTATTTTTATGTTSSGAATSKT) shows a compositional bias: low complexity. A disordered region spans residues 542–589 (SSVTATTTTTATGTTSSGAATSKTIGNNKGLKSVQEIPDNEDESSDEE). Positions 579–589 (PDNEDESSDEE) are enriched in acidic residues. Glu-714 (charge relay system) is an active-site residue. Residue 720-726 (STMRGCK) coordinates CoA. Residues 781–783 (SRF) and 808–816 (DAMGMNMIS) contribute to the NADP(+) site. Lys-848 acts as the Charge relay system in catalysis. Position 877–879 (877–879 (VLK)) interacts with CoA. Residue Asp-924 is the Charge relay system of the active site. The helical transmembrane segment at 997–1017 (IVASAVLAAELSLCSALAAGH) threads the bilayer. 1021-1022 (SH) is a binding site for CoA. Residue His-1022 is the Proton donor of the active site. The segment at 1025–1056 (HNRSKAPAAGATTTTTPAITDSKASNGSIASN) is disordered. Residue 1026–1027 (NR) participates in NADP(+) binding. Residues 1030-1042 (APAAGATTTTTPA) are compositionally biased toward low complexity. The segment covering 1046-1055 (SKASNGSIAS) has biased composition (polar residues).

This sequence belongs to the HMG-CoA reductase family.

It localises to the endoplasmic reticulum membrane. The catalysed reaction is (R)-mevalonate + 2 NADP(+) + CoA = (3S)-3-hydroxy-3-methylglutaryl-CoA + 2 NADPH + 2 H(+). It functions in the pathway metabolic intermediate biosynthesis; (R)-mevalonate biosynthesis; (R)-mevalonate from acetyl-CoA: step 3/3. In terms of biological role, HMG-CoA reductase; part of the first module of ergosterol biosynthesis pathway that includes the early steps of the pathway, conserved across all eukaryotes, and which results in the formation of mevalonate from acetyl-coenzyme A (acetyl-CoA). HMG1 catalyzes the reduction of hydroxymethylglutaryl-CoA (HMG-CoA) to mevalonate. The first module starts with the action of the cytosolic acetyl-CoA acetyltransferase ERG10 that catalyzes the formation of acetoacetyl-CoA. The hydroxymethylglutaryl-CoA synthase ERG13 then condenses acetyl-CoA with acetoacetyl-CoA to form HMG-CoA. The 3-hydroxy-3-methylglutaryl-coenzyme A (HMG-CoA) reductase HMG1 finally reduces HMG-CoA to produce mevalonate. In Candida albicans (strain SC5314 / ATCC MYA-2876) (Yeast), this protein is 3-hydroxy-3-methylglutaryl-coenzyme A reductase 1.